Reading from the N-terminus, the 785-residue chain is Semaphorin-3F (785 aa).

The first 18 residues, 1 to 18 (MLVTAFILWASLLTGAWP), serve as a signal peptide directing secretion. In terms of domain architecture, Sema spans 31-545 (RVRLSFKELK…SAVGVTHLSL (515 aa)). N53 carries an N-linked (GlcNAc...) asparagine glycan. C104 and C115 are joined by a disulfide. The N-linked (GlcNAc...) asparagine glycan is linked to N126. 4 disulfide bridges follow: C133/C142, C300/C412, C324/C372, and C548/C566. The segment at 583–602 (RSRRQDVRHGNPIRQCRGFN) is disordered. The region spanning 605–695 (ANKNAVESVQ…KHIVTRVQLH (91 aa)) is the Ig-like C2-type domain. The cysteines at positions 678 and 746 are disulfide-linked. The interval 753–785 (VPPRPREAPGALRPPELQDQKKPRNRRHHPPDT) is disordered. Positions 775 to 785 (PRNRRHHPPDT) are enriched in basic residues.

It belongs to the semaphorin family. In terms of tissue distribution, expressed ubiquitously in adulthood. During embryogenesis, expressed in subregions of the central nervous system and various other tissues like skin, kidney, lung and intestine.

It localises to the secreted. This is Semaphorin-3F (Sema3f) from Mus musculus (Mouse).